The primary structure comprises 377 residues: tRNA 2-selenouridine synthase (377 aa).

Residues isoleucine 18–aspartate 141 enclose the Rhodanese domain. Cysteine 101 acts as the S-selanylcysteine intermediate in catalysis.

It belongs to the SelU family. Monomer.

The catalysed reaction is 5-methylaminomethyl-2-thiouridine(34) in tRNA + selenophosphate + (2E)-geranyl diphosphate + H2O + H(+) = 5-methylaminomethyl-2-selenouridine(34) in tRNA + (2E)-thiogeraniol + phosphate + diphosphate. It catalyses the reaction 5-methylaminomethyl-2-thiouridine(34) in tRNA + (2E)-geranyl diphosphate = 5-methylaminomethyl-S-(2E)-geranyl-thiouridine(34) in tRNA + diphosphate. It carries out the reaction 5-methylaminomethyl-S-(2E)-geranyl-thiouridine(34) in tRNA + selenophosphate + H(+) = 5-methylaminomethyl-2-(Se-phospho)selenouridine(34) in tRNA + (2E)-thiogeraniol. The enzyme catalyses 5-methylaminomethyl-2-(Se-phospho)selenouridine(34) in tRNA + H2O = 5-methylaminomethyl-2-selenouridine(34) in tRNA + phosphate. Functionally, involved in the post-transcriptional modification of the uridine at the wobble position (U34) of tRNA(Lys), tRNA(Glu) and tRNA(Gln). Catalyzes the conversion of 2-thiouridine (S2U-RNA) to 2-selenouridine (Se2U-RNA). Acts in a two-step process involving geranylation of 2-thiouridine (S2U) to S-geranyl-2-thiouridine (geS2U) and subsequent selenation of the latter derivative to 2-selenouridine (Se2U) in the tRNA chain. The sequence is that of tRNA 2-selenouridine synthase from Cronobacter sakazakii (strain ATCC BAA-894) (Enterobacter sakazakii).